Reading from the N-terminus, the 152-residue chain is Putative pre-16S rRNA nuclease (152 aa).

Belongs to the YqgF nuclease family.

It is found in the cytoplasm. Its function is as follows. Could be a nuclease involved in processing of the 5'-end of pre-16S rRNA. The polypeptide is Putative pre-16S rRNA nuclease (Nitrosococcus oceani (strain ATCC 19707 / BCRC 17464 / JCM 30415 / NCIMB 11848 / C-107)).